Here is a 426-residue protein sequence, read N- to C-terminus: Inositol hexakisphosphate kinase 2 (426 aa).

ATP is bound by residues 207–209 (ENL) and Asp-220. Substrate-binding positions include Lys-222 and 236-243 (KAANQIRK). Asp-383 lines the ATP pocket. His-386 provides a ligand contact to substrate.

The protein belongs to the inositol phosphokinase (IPK) family.

The protein resides in the nucleus. It catalyses the reaction 1D-myo-inositol hexakisphosphate + ATP = 5-diphospho-1D-myo-inositol 1,2,3,4,6-pentakisphosphate + ADP. It functions in the pathway phospholipid metabolism; phosphatidylinositol metabolism. Inhibited by flavonoids, including myricetin, quercetin, luteolin, isorhamnetin, rhamnetin, kaempferol, diosmetin and apigenin. Functionally, converts inositol hexakisphosphate (InsP6) to diphosphoinositol pentakisphosphate (InsP7/PP-InsP5). The sequence is that of Inositol hexakisphosphate kinase 2 from Homo sapiens (Human).